Consider the following 447-residue polypeptide: Cysteine--tRNA ligase (447 aa).

Cys28 provides a ligand contact to Zn(2+). A 'HIGH' region motif is present at residues Pro30 to Asn40. The Zn(2+) site is built by Cys211, His236, and Glu240. The 'KMSKS' region motif lies at Lys268–Ser272. Lys271 provides a ligand contact to ATP.

It belongs to the class-I aminoacyl-tRNA synthetase family. Monomer. Requires Zn(2+) as cofactor.

It is found in the cytoplasm. It catalyses the reaction tRNA(Cys) + L-cysteine + ATP = L-cysteinyl-tRNA(Cys) + AMP + diphosphate. This is Cysteine--tRNA ligase from Streptococcus pyogenes serotype M3 (strain ATCC BAA-595 / MGAS315).